A 209-amino-acid chain; its full sequence is Large ribosomal subunit protein uL3 (209 aa).

Glutamine 150 is modified (N5-methylglutamine).

It belongs to the universal ribosomal protein uL3 family. In terms of assembly, part of the 50S ribosomal subunit. Forms a cluster with proteins L14 and L19. Methylated by PrmB.

Functionally, one of the primary rRNA binding proteins, it binds directly near the 3'-end of the 23S rRNA, where it nucleates assembly of the 50S subunit. This is Large ribosomal subunit protein uL3 from Vibrio vulnificus (strain CMCP6).